The sequence spans 242 residues: DNA repair protein RecO (242 aa).

Belongs to the RecO family. Monomer.

Involved in DNA repair and RecF pathway recombination. The sequence is that of DNA repair protein RecO from Salmonella gallinarum (strain 287/91 / NCTC 13346).